The sequence spans 159 residues: Putative 4-hydroxy-4-methyl-2-oxoglutarate aldolase (159 aa).

Substrate-binding positions include 74-77 (GDNL) and R96. D97 lines the a divalent metal cation pocket.

The protein belongs to the class II aldolase/RraA-like family. Homotrimer. Requires a divalent metal cation as cofactor.

It carries out the reaction 4-hydroxy-4-methyl-2-oxoglutarate = 2 pyruvate. It catalyses the reaction oxaloacetate + H(+) = pyruvate + CO2. Catalyzes the aldol cleavage of 4-hydroxy-4-methyl-2-oxoglutarate (HMG) into 2 molecules of pyruvate. Also contains a secondary oxaloacetate (OAA) decarboxylase activity due to the common pyruvate enolate transition state formed following C-C bond cleavage in the retro-aldol and decarboxylation reactions. The sequence is that of Putative 4-hydroxy-4-methyl-2-oxoglutarate aldolase from Bacillus anthracis.